Reading from the N-terminus, the 465-residue chain is ATP synthase subunit beta (465 aa).

Residue 152–159 participates in ATP binding; the sequence is GGAGVGKT.

The protein belongs to the ATPase alpha/beta chains family. As to quaternary structure, F-type ATPases have 2 components, CF(1) - the catalytic core - and CF(0) - the membrane proton channel. CF(1) has five subunits: alpha(3), beta(3), gamma(1), delta(1), epsilon(1). CF(0) has three main subunits: a(1), b(2) and c(9-12). The alpha and beta chains form an alternating ring which encloses part of the gamma chain. CF(1) is attached to CF(0) by a central stalk formed by the gamma and epsilon chains, while a peripheral stalk is formed by the delta and b chains.

It is found in the cell inner membrane. It carries out the reaction ATP + H2O + 4 H(+)(in) = ADP + phosphate + 5 H(+)(out). Functionally, produces ATP from ADP in the presence of a proton gradient across the membrane. The catalytic sites are hosted primarily by the beta subunits. This is ATP synthase subunit beta from Campylobacter concisus (strain 13826).